The following is a 179-amino-acid chain: Large ribosomal subunit protein uL5 (179 aa).

Belongs to the universal ribosomal protein uL5 family. As to quaternary structure, part of the 50S ribosomal subunit; part of the 5S rRNA/L5/L18/L25 subcomplex. Contacts the 5S rRNA and the P site tRNA. Forms a bridge to the 30S subunit in the 70S ribosome.

Functionally, this is one of the proteins that bind and probably mediate the attachment of the 5S RNA into the large ribosomal subunit, where it forms part of the central protuberance. In the 70S ribosome it contacts protein S13 of the 30S subunit (bridge B1b), connecting the 2 subunits; this bridge is implicated in subunit movement. Contacts the P site tRNA; the 5S rRNA and some of its associated proteins might help stabilize positioning of ribosome-bound tRNAs. This Prochlorococcus marinus (strain MIT 9211) protein is Large ribosomal subunit protein uL5.